The chain runs to 305 residues: tRNA uridine(34) hydroxylase (305 aa).

A Rhodanese domain is found at 125 to 219; it reads ADENTVVVDT…YLEEVPREDS (95 aa). Cys179 (cysteine persulfide intermediate) is an active-site residue.

Belongs to the TrhO family.

It carries out the reaction uridine(34) in tRNA + AH2 + O2 = 5-hydroxyuridine(34) in tRNA + A + H2O. Functionally, catalyzes oxygen-dependent 5-hydroxyuridine (ho5U) modification at position 34 in tRNAs. This is tRNA uridine(34) hydroxylase from Brucella anthropi (strain ATCC 49188 / DSM 6882 / CCUG 24695 / JCM 21032 / LMG 3331 / NBRC 15819 / NCTC 12168 / Alc 37) (Ochrobactrum anthropi).